The following is a 483-amino-acid chain: MKDYEVVIGLEVHVELATKTKIFCGCSTEFGGAPNSHTCPVCTGMPGSLPVLNKKVVEYAAAVGLATNCTITQDCKFDRKNYFYPDNPQNYQISQLYLPICRNGHVDVTLSDGTEKTIRIHEIHMEEDAGKLVHDEWEGVSYVDYNRSGVPLIEIVSEPDMRSAEEVIAYLTKLRTTIQYLGASDCKLQEGSMRADVNLSVRERGSNEFGTRTETKNLNSFAAIERAIKAETARQIDLIEAGEKVVQETRRWNDDKEYSYAMRSKEDAQDYRYFPDPDLVPIHISDEYLAELKAKQPEFKDEKKARYIEEFGLPEYDAEILTDSKKFTEIFEEATAICNQPKKVSNWIMGETMRLMKEESAKTGREFRAEELTFSPESLAKIITLVEKKEINNAAAKEIFEHVFAENVDVDAYVEEHGLKQVNDEGALRATVEKVIADNPQSVADYKGGKKQAIGYLVGQTMKAMQGKANPGMVNALLQELLK.

It belongs to the GatB/GatE family. GatB subfamily. In terms of assembly, heterotrimer of A, B and C subunits.

It carries out the reaction L-glutamyl-tRNA(Gln) + L-glutamine + ATP + H2O = L-glutaminyl-tRNA(Gln) + L-glutamate + ADP + phosphate + H(+). The catalysed reaction is L-aspartyl-tRNA(Asn) + L-glutamine + ATP + H2O = L-asparaginyl-tRNA(Asn) + L-glutamate + ADP + phosphate + 2 H(+). Allows the formation of correctly charged Asn-tRNA(Asn) or Gln-tRNA(Gln) through the transamidation of misacylated Asp-tRNA(Asn) or Glu-tRNA(Gln) in organisms which lack either or both of asparaginyl-tRNA or glutaminyl-tRNA synthetases. The reaction takes place in the presence of glutamine and ATP through an activated phospho-Asp-tRNA(Asn) or phospho-Glu-tRNA(Gln). In Lachnospira eligens (strain ATCC 27750 / DSM 3376 / VPI C15-48 / C15-B4) (Eubacterium eligens), this protein is Aspartyl/glutamyl-tRNA(Asn/Gln) amidotransferase subunit B.